A 394-amino-acid polypeptide reads, in one-letter code: uncharacterized protein (394 aa).

A run of 2 helical transmembrane segments spans residues 31 to 51 (LAILSLFLGIAACILIALSGL) and 57 to 77 (LIIALSLISIIVLSTGISLLI).

It belongs to the chlamydial CPn_0129/CT_036/TC_0306 family.

It is found in the cell membrane. This is an uncharacterized protein from Chlamydia pneumoniae (Chlamydophila pneumoniae).